We begin with the raw amino-acid sequence, 102 residues long: Urease subunit beta (102 aa).

This sequence belongs to the urease beta subunit family. Heterotrimer of UreA (gamma), UreB (beta) and UreC (alpha) subunits. Three heterotrimers associate to form the active enzyme.

The protein localises to the cytoplasm. The catalysed reaction is urea + 2 H2O + H(+) = hydrogencarbonate + 2 NH4(+). It participates in nitrogen metabolism; urea degradation; CO(2) and NH(3) from urea (urease route): step 1/1. The protein is Urease subunit beta of Methylobacillus flagellatus (strain ATCC 51484 / DSM 6875 / VKM B-1610 / KT).